The chain runs to 607 residues: Glutamyl-tRNA(Gln) amidotransferase subunit E (607 aa).

The protein belongs to the GatB/GatE family. GatE subfamily. As to quaternary structure, heterodimer of GatD and GatE.

The enzyme catalyses L-glutamyl-tRNA(Gln) + L-glutamine + ATP + H2O = L-glutaminyl-tRNA(Gln) + L-glutamate + ADP + phosphate + H(+). Its function is as follows. Allows the formation of correctly charged Gln-tRNA(Gln) through the transamidation of misacylated Glu-tRNA(Gln) in organisms which lack glutaminyl-tRNA synthetase. The reaction takes place in the presence of glutamine and ATP through an activated gamma-phospho-Glu-tRNA(Gln). The GatDE system is specific for glutamate and does not act on aspartate. The sequence is that of Glutamyl-tRNA(Gln) amidotransferase subunit E from Pyrobaculum islandicum (strain DSM 4184 / JCM 9189 / GEO3).